Here is a 381-residue protein sequence, read N- to C-terminus: Succinyl-diaminopimelate desuccinylase (381 aa).

H72 provides a ligand contact to Zn(2+). The active site involves D74. A Zn(2+)-binding site is contributed by D105. The active-site Proton acceptor is the E139. Zn(2+)-binding residues include E140, E168, and H354.

The protein belongs to the peptidase M20A family. DapE subfamily. Homodimer. The cofactor is Zn(2+). Requires Co(2+) as cofactor.

The catalysed reaction is N-succinyl-(2S,6S)-2,6-diaminopimelate + H2O = (2S,6S)-2,6-diaminopimelate + succinate. The protein operates within amino-acid biosynthesis; L-lysine biosynthesis via DAP pathway; LL-2,6-diaminopimelate from (S)-tetrahydrodipicolinate (succinylase route): step 3/3. In terms of biological role, catalyzes the hydrolysis of N-succinyl-L,L-diaminopimelic acid (SDAP), forming succinate and LL-2,6-diaminopimelate (DAP), an intermediate involved in the bacterial biosynthesis of lysine and meso-diaminopimelic acid, an essential component of bacterial cell walls. This Shewanella sp. (strain MR-7) protein is Succinyl-diaminopimelate desuccinylase.